The primary structure comprises 343 residues: Twinfilin (343 aa).

2 ADF-H domains span residues 4-139 (QTGI…KHKI) and 177-312 (GINC…EELH). Residues 317–343 (NLRPQFSKPKGPPSRGAKRLTKPQAVE) form a disordered region.

The protein belongs to the actin-binding proteins ADF family. Twinfilin subfamily. In terms of assembly, interacts with G-actin; ADP-actin form.

It is found in the cytoplasm. The protein resides in the cytoskeleton. It localises to the cell cortex. In terms of biological role, actin-binding protein involved in motile and morphological processes. Inhibits actin polymerization, likely by sequestering G-actin. The protein is Twinfilin (twf) of Aedes aegypti (Yellowfever mosquito).